Consider the following 168-residue polypeptide: Cilia- and flagella-associated protein 276 (168 aa).

Disordered regions lie at residues 35–61 (AHLA…RDTF) and 149–168 (HTAA…FFST). Residues 38–55 (AQQQDPWSRLSSTPTATS) show a composition bias toward polar residues.

As to quaternary structure, microtubule inner protein component of sperm flagellar doublet microtubules. In terms of tissue distribution, predominantly expressed in nervous system tissues, such as the spinal cord, cerebrum, cerebellum, and sciatic nerve.

The protein resides in the cytoplasm. The protein localises to the cytoskeleton. It localises to the cilium axoneme. Its subcellular location is the flagellum axoneme. Functionally, microtubule inner protein (MIP) part of the dynein-decorated doublet microtubules (DMTs) in cilia axoneme, which is required for motile cilia beating. May play an important role for the maintenance of myelin-axon integrity. May affect intracellular Ca(2+) homeostasis. This chain is Cilia- and flagella-associated protein 276, found in Mus musculus (Mouse).